A 205-amino-acid polypeptide reads, in one-letter code: Ras-related protein Rab-1A (205 aa).

Residues 18–26 (GDSGVGKSC), 36–43 (YTESYIST), 66–70 (DTAGQ), 124–127 (NKSD), and 154–156 (SAK) contribute to the GTP site. Residues 40–48 (YISTIGVDF) carry the Effector region motif. Positions 183-198 (SDSKPSVKINSSTPVS) are enriched in polar residues. Residues 183-205 (SDSKPSVKINSSTPVSANKGGCC) form a disordered region. Residues C204 and C205 are each lipidated (S-geranylgeranyl cysteine).

This sequence belongs to the small GTPase superfamily. Rab family.

Its subcellular location is the golgi apparatus. It localises to the endoplasmic reticulum. Its function is as follows. Probably required for transit of protein from the ER through Golgi compartment. In Lymnaea stagnalis (Great pond snail), this protein is Ras-related protein Rab-1A (RAB1A).